We begin with the raw amino-acid sequence, 40 residues long: Fibrinolytic protease (40 aa).

In terms of domain architecture, Peptidase S1 spans 1–40 (IVGGNEVTPHAYPWQVGLFIDDMYFCGGSISVTLTGWGKP).

The protein belongs to the peptidase S1 family.

It is found in the secreted. Its subcellular location is the extracellular space. Serine protease with fibrinolytic activity. The protein is Fibrinolytic protease of Euphausia superba (Antarctic krill).